A 204-amino-acid polypeptide reads, in one-letter code: MSKVVVLNDKLEKAGELDLPSKYAEVNPHNLYLYVKSYLASLRANTAHTKGRSDVSGGGKKPWRQKGRGGARAGSTRTNVWVGGAVAFGPTNERNYFQKVNKKQKRLALERALADKAAKGALFTADSLAIESGKTKDANAVIKKLGVKDALIVKDLLDEKTLLAYRNLANCYVVDVTEVNAYLVSVFNAVIIEKSALESITKEG.

The disordered stretch occupies residues 49 to 75 (TKGRSDVSGGGKKPWRQKGRGGARAGS).

This sequence belongs to the universal ribosomal protein uL4 family. As to quaternary structure, part of the 50S ribosomal subunit.

One of the primary rRNA binding proteins, this protein initially binds near the 5'-end of the 23S rRNA. It is important during the early stages of 50S assembly. It makes multiple contacts with different domains of the 23S rRNA in the assembled 50S subunit and ribosome. Its function is as follows. Forms part of the polypeptide exit tunnel. The chain is Large ribosomal subunit protein uL4 from Campylobacter jejuni subsp. jejuni serotype O:23/36 (strain 81-176).